A 1387-amino-acid polypeptide reads, in one-letter code: DNA-directed RNA polymerase subunit beta'' (1387 aa).

Residues cysteine 224, cysteine 295, cysteine 302, and cysteine 305 each contribute to the Zn(2+) site. A disordered region spans residues 883 to 903; it reads SHTGKRNDPAGSGLIPDNGSD.

It belongs to the RNA polymerase beta' chain family. RpoC2 subfamily. In terms of assembly, in plastids the minimal PEP RNA polymerase catalytic core is composed of four subunits: alpha, beta, beta', and beta''. When a (nuclear-encoded) sigma factor is associated with the core the holoenzyme is formed, which can initiate transcription. Zn(2+) is required as a cofactor.

The protein localises to the plastid. The protein resides in the chloroplast. It carries out the reaction RNA(n) + a ribonucleoside 5'-triphosphate = RNA(n+1) + diphosphate. In terms of biological role, DNA-dependent RNA polymerase catalyzes the transcription of DNA into RNA using the four ribonucleoside triphosphates as substrates. This is DNA-directed RNA polymerase subunit beta'' from Platanus occidentalis (Sycamore).